Reading from the N-terminus, the 283-residue chain is Pantothenate synthetase (283 aa).

Residue 34-41 (MGALHEGH) participates in ATP binding. The active-site Proton donor is the H41. (R)-pantoate is bound at residue Q65. Q65 serves as a coordination point for beta-alanine. 152–155 (GEKD) is a binding site for ATP. (R)-pantoate is bound at residue Q158. 189–192 (MSSR) provides a ligand contact to ATP.

Belongs to the pantothenate synthetase family. In terms of assembly, homodimer.

The protein resides in the cytoplasm. It catalyses the reaction (R)-pantoate + beta-alanine + ATP = (R)-pantothenate + AMP + diphosphate + H(+). It functions in the pathway cofactor biosynthesis; (R)-pantothenate biosynthesis; (R)-pantothenate from (R)-pantoate and beta-alanine: step 1/1. Its function is as follows. Catalyzes the condensation of pantoate with beta-alanine in an ATP-dependent reaction via a pantoyl-adenylate intermediate. This is Pantothenate synthetase from Rhodopseudomonas palustris (strain BisA53).